A 645-amino-acid polypeptide reads, in one-letter code: UPF0313 protein CLB_0243 (645 aa).

A Radical SAM core domain is found at 295–566 (AIKEVKFSIT…RMQRALLQFS (272 aa)). [4Fe-4S] cluster contacts are provided by Cys309, Cys313, and Cys316. The disordered stretch occupies residues 598–645 (NKPYKKSHKKNNAKNNNNHYNKNNNYNKNKDISKKNKKNSLSKHKKRK). The span at 600–609 (PYKKSHKKNN) shows a compositional bias: basic residues. The segment covering 610–624 (AKNNNNHYNKNNNYN) has biased composition (low complexity). Positions 632 to 645 (KNKKNSLSKHKKRK) are enriched in basic residues.

It belongs to the UPF0313 family. [4Fe-4S] cluster is required as a cofactor.

This chain is UPF0313 protein CLB_0243, found in Clostridium botulinum (strain ATCC 19397 / Type A).